A 170-amino-acid polypeptide reads, in one-letter code: Putative invertase inhibitor (170 aa).

The first 14 residues, 1–14 (MKLSFSLCIFFLIS), serve as a signal peptide directing secretion. Cystine bridges form between C22–C37 and C93–C133.

Belongs to the PMEI family. In terms of tissue distribution, expressed in pollen (at protein level). Expressed in pollen.

The sequence is that of Putative invertase inhibitor from Platanus orientalis (Oriental plane-tree).